Reading from the N-terminus, the 318-residue chain is NADH-ubiquinone oxidoreductase chain 1 (318 aa).

A run of 8 helical transmembrane segments spans residues 2–22 (FMVN…FLTL), 71–91 (YIIA…PLPI), 98–118 (INLG…SILW), 146–166 (LAII…STLI), 171–191 (HTWL…STLA), 222–242 (LFFM…ATIF), 253–273 (EFFS…FLWV), and 294–314 (LPLT…LANI).

It belongs to the complex I subunit 1 family.

Its subcellular location is the mitochondrion inner membrane. The catalysed reaction is a ubiquinone + NADH + 5 H(+)(in) = a ubiquinol + NAD(+) + 4 H(+)(out). In terms of biological role, core subunit of the mitochondrial membrane respiratory chain NADH dehydrogenase (Complex I) that is believed to belong to the minimal assembly required for catalysis. Complex I functions in the transfer of electrons from NADH to the respiratory chain. The immediate electron acceptor for the enzyme is believed to be ubiquinone. The sequence is that of NADH-ubiquinone oxidoreductase chain 1 (MT-ND1) from Nycticebus coucang (Slow loris).